The chain runs to 237 residues: Protein lin-31 (237 aa).

The segment at residues 12–103 is a DNA-binding region (fork-head); that stretch reads QKPPYSYIWL…SGMFENGSCL (92 aa). Disordered regions lie at residues 110–141 and 195–237; these read RARG…LLPE and NFES…ILSS. Low complexity-rich tracts occupy residues 206–216 and 227–237; these read SEISGSGSSSS and SSFSIESILSS.

Its subcellular location is the nucleus. Lin-31 regulates how vulval precursor cells choose their fate. It helps specify three alternative cell fates in vulval development. The protein is Protein lin-31 (lin-31) of Caenorhabditis elegans.